The following is a 438-amino-acid chain: Iroquois-class homeodomain protein IRX-6 (438 aa).

Positions 143 to 205 form a DNA-binding region, homeobox; that stretch reads SAGRRKNATR…NARRRLKKEN (63 aa). Disordered stretches follow at residues 205–270 and 388–438; these read NKMT…EAAV and PRDS…GAEG. Positions 214 to 223 are enriched in basic and acidic residues; it reads KGGEERKADS. The segment covering 252–268 has biased composition (acidic residues); it reads LEDLEEEEEEEEAEEEA.

Belongs to the TALE/IRO homeobox family. Expressed in a subset of retinal ganglion cells and bipolar cells; including in type 2 and type 3a bipolar cells.

It is found in the nucleus. Its function is as follows. Transcription factor. Binds to the iroquois binding site (IBS) motif of target genes to regulate gene expression; functions as a transcriptional activator or repressor. Modulates expression of RCVRN, VSX1, BHLHE22/BHLHB5 and TACR3/Nk3r. Required downstream of retinal bipolar cell specification for the terminal differentiation of type 2, type 3a and possibly type 6 bipolar cells. In Mus musculus (Mouse), this protein is Iroquois-class homeodomain protein IRX-6 (Irx6).